Reading from the N-terminus, the 375-residue chain is 2-methylcitrate synthase (375 aa).

Positions 72 and 187 each coordinate substrate. Residue His222 is part of the active site. 255–259 is a binding site for CoA; it reads KIMGF. The active site involves His261. A substrate-binding site is contributed by Arg270. The active site involves Asp312. Substrate is bound by residues Arg337 and Arg356.

Belongs to the citrate synthase family. As to quaternary structure, homodimer.

It catalyses the reaction propanoyl-CoA + oxaloacetate + H2O = (2S,3S)-2-methylcitrate + CoA + H(+). The catalysed reaction is oxaloacetate + acetyl-CoA + H2O = citrate + CoA + H(+). The protein operates within organic acid metabolism; propanoate degradation. It functions in the pathway carbohydrate metabolism; tricarboxylic acid cycle; isocitrate from oxaloacetate: step 1/2. Involved in the catabolism of short chain fatty acids (SCFA) via the tricarboxylic acid (TCA)(acetyl degradation route) and via the 2-methylcitrate cycle II (propionate degradation route). Catalyzes the Claisen condensation of propionyl-CoA and oxaloacetate (OAA) to yield 2-methylcitrate (2-MC) and CoA. Catalyzes the condensation of oxaloacetate with acetyl-CoA. This is 2-methylcitrate synthase (prpC) from Shewanella oneidensis (strain ATCC 700550 / JCM 31522 / CIP 106686 / LMG 19005 / NCIMB 14063 / MR-1).